The chain runs to 525 residues: GMP synthase [glutamine-hydrolyzing] (525 aa).

The 200-residue stretch at 8–207 folds into the Glutamine amidotransferase type-1 domain; the sequence is KILILDFGSQ…VMDICGCDNK (200 aa). Cys-85 (nucleophile) is an active-site residue. Active-site residues include His-181 and Glu-183. The region spanning 208 to 400 is the GMPS ATP-PPase domain; it reads WQPASIIEDA…LGLPYDMLYR (193 aa). 235-241 provides a ligand contact to ATP; it reads SGGVDSS.

Homodimer.

It catalyses the reaction XMP + L-glutamine + ATP + H2O = GMP + L-glutamate + AMP + diphosphate + 2 H(+). It functions in the pathway purine metabolism; GMP biosynthesis; GMP from XMP (L-Gln route): step 1/1. Its function is as follows. Catalyzes the synthesis of GMP from XMP. The sequence is that of GMP synthase [glutamine-hydrolyzing] from Shewanella amazonensis (strain ATCC BAA-1098 / SB2B).